The sequence spans 606 residues: 1-deoxy-D-xylulose-5-phosphate synthase (606 aa).

Residues His-63 and 104-106 each bind thiamine diphosphate; that span reads GHS. Asp-137 serves as a coordination point for Mg(2+). Thiamine diphosphate is bound by residues 138–139, Asn-166, Tyr-273, and Glu-354; that span reads GS. Residue Asn-166 participates in Mg(2+) binding.

The protein belongs to the transketolase family. DXPS subfamily. Homodimer. Mg(2+) is required as a cofactor. Requires thiamine diphosphate as cofactor.

It carries out the reaction D-glyceraldehyde 3-phosphate + pyruvate + H(+) = 1-deoxy-D-xylulose 5-phosphate + CO2. Its pathway is metabolic intermediate biosynthesis; 1-deoxy-D-xylulose 5-phosphate biosynthesis; 1-deoxy-D-xylulose 5-phosphate from D-glyceraldehyde 3-phosphate and pyruvate: step 1/1. In terms of biological role, catalyzes the acyloin condensation reaction between C atoms 2 and 3 of pyruvate and glyceraldehyde 3-phosphate to yield 1-deoxy-D-xylulose-5-phosphate (DXP). This chain is 1-deoxy-D-xylulose-5-phosphate synthase, found in Sulfurimonas denitrificans (strain ATCC 33889 / DSM 1251) (Thiomicrospira denitrificans (strain ATCC 33889 / DSM 1251)).